The chain runs to 285 residues: BAG family molecular chaperone regulator 2 (285 aa).

The Ubiquitin-like domain occupies Arg37–Gln113. The 79-residue stretch at Ala132 to Lys210 folds into the BAG domain. Ser244 is subject to Phosphoserine.

In terms of assembly, binds to the ATPase domain of HSP70/HSC70 chaperones.

Co-chaperone that regulates diverse cellular pathways, such as programmed cell death and stress responses. The sequence is that of BAG family molecular chaperone regulator 2 (BAG2) from Arabidopsis thaliana (Mouse-ear cress).